A 120-amino-acid polypeptide reads, in one-letter code: NAD(P)H-quinone oxidoreductase subunit 3 (120 aa).

3 consecutive transmembrane segments (helical) span residues 10–30, 64–84, and 89–109; these read FLGF…TNLI, MFAL…PWAV, and LGLL…IALA.

Belongs to the complex I subunit 3 family. As to quaternary structure, NDH-1 can be composed of about 15 different subunits; different subcomplexes with different compositions have been identified which probably have different functions.

It localises to the cellular thylakoid membrane. The enzyme catalyses a plastoquinone + NADH + (n+1) H(+)(in) = a plastoquinol + NAD(+) + n H(+)(out). The catalysed reaction is a plastoquinone + NADPH + (n+1) H(+)(in) = a plastoquinol + NADP(+) + n H(+)(out). Its function is as follows. NDH-1 shuttles electrons from an unknown electron donor, via FMN and iron-sulfur (Fe-S) centers, to quinones in the respiratory and/or the photosynthetic chain. The immediate electron acceptor for the enzyme in this species is believed to be plastoquinone. Couples the redox reaction to proton translocation, and thus conserves the redox energy in a proton gradient. Cyanobacterial NDH-1 also plays a role in inorganic carbon-concentration. The polypeptide is NAD(P)H-quinone oxidoreductase subunit 3 (Prochlorococcus marinus (strain AS9601)).